We begin with the raw amino-acid sequence, 157 residues long: Cysteine protease Nivulian-2 (157 aa).

Belongs to the intron maturase 2 family. MatK subfamily. Monomer. In terms of processing, glycosylated. Accumulates in latex (at protein level).

With respect to regulation, inhibited by HgCl(2), iodoacetamide (IAA) and, to a far lesser extent, by SDS, hydrogen peroxide H(1)O(2), KCl, NaCl, ZnCl(2), AgSO(4), CdCl(2), FeCl(3), PMSF, Pepstatin A and EDTA. Repressed moderately by many organic solvents such as diethyl ether, ethy lacetate, acetophenone, butanol, trichloroethylene, tetrahydrofuran, methanol, chloroform and dichloromethane, and, to a lesser extent, by propanol, benzyl alcohol and chlorobenzene. Its function is as follows. Cysteine protease inducing milk clotting by cleaving casein. Exhibits biomedical activities such as wound healing, haemostatic and antibacterial activity, as well as agricultural application in biocontrol process against the infectious management of the root knot nematode Meloidogyne incognita. In Euphorbia nivulia (Leafy milk hedge), this protein is Cysteine protease Nivulian-2.